Here is a 317-residue protein sequence, read N- to C-terminus: Melanocyte-stimulating hormone receptor (317 aa).

At 1-37 (MPVQGSQRRLLGSLNSTPTATPRLGLAANQTGARCLE) the chain is on the extracellular side. N-linked (GlcNAc...) asparagine glycosylation occurs at Asn29. A helical membrane pass occupies residues 38 to 63 (VSIPDGLFLSLGLVSLVENVLVVVAI). Over 64–72 (ARNRNLHSP) the chain is Cytoplasmic. The helical transmembrane segment at 73–93 (MYCFICCLALSDLLVSGSNML) threads the bilayer. Residues 94–118 (DTAVILLLEAGALAARAAVVQQLDN) are Extracellular-facing. A helical membrane pass occupies residues 119–140 (VIDVITCSSMLSSLCFLGAIAV). At 141–163 (DRYISIFYALRYHSIVTLRRARR) the chain is on the cytoplasmic side. A helical transmembrane segment spans residues 164 to 183 (VVAAIWVASILFSTLFIAYC). Residues 184 to 191 (DHAAVLLC) are Extracellular-facing. A helical transmembrane segment spans residues 192-211 (LVVFFLAMLVLMAVLYVHML). Over 212–240 (ARACQHAQGIAQLHKRQRPAHQGVGLKGA) the chain is Cytoplasmic. The chain crosses the membrane as a helical span at residues 241–266 (ATLTILLGIFFLCWGPFFLHLTLIVL). Residues 267 to 279 (CPQHPTCSCIFKN) are Extracellular-facing. The chain crosses the membrane as a helical span at residues 280–300 (FNLFLTLIICNAIIDPLIYAF). Over 301-317 (RSQELRRTLKKVLLCSW) the chain is Cytoplasmic. The S-palmitoyl cysteine moiety is linked to residue Cys315.

It belongs to the G-protein coupled receptor 1 family. Interacts with MGRN1, but does not undergo MGRN1-mediated ubiquitination; this interaction competes with GNAS-binding and thus inhibits agonist-induced cAMP production. Interacts with OPN3; the interaction results in a decrease in MC1R-mediated cAMP signaling and ultimately a decrease in melanin production in melanocytes.

The protein resides in the cell membrane. Receptor for MSH (alpha, beta and gamma) and ACTH. The activity of this receptor is mediated by G proteins which activate adenylate cyclase. Mediates melanogenesis, the production of eumelanin (black/brown) and phaeomelanin (red/yellow), via regulation of cAMP signaling in melanocytes. In Trachypithecus francoisi (Francois' leaf monkey), this protein is Melanocyte-stimulating hormone receptor (MC1R).